The following is a 229-amino-acid chain: Cytidylate kinase (229 aa).

ATP is bound at residue 7-15 (GPAGAGKSS).

The protein belongs to the cytidylate kinase family. Type 1 subfamily.

Its subcellular location is the cytoplasm. It catalyses the reaction CMP + ATP = CDP + ADP. The catalysed reaction is dCMP + ATP = dCDP + ADP. This chain is Cytidylate kinase, found in Rhodopirellula baltica (strain DSM 10527 / NCIMB 13988 / SH1).